The following is a 697-amino-acid chain: Serotransferrin (697 aa).

The first 19 residues, 1–19 (MRLTVGALLACAALGLCLA), serve as a signal peptide directing secretion. Transferrin-like domains lie at 25–347 (VKWC…NQQE) and 360–682 (VKWC…NMRK). Cystine bridges form between Cys28–Cys67 and Cys38–Cys58. Dimethylated arginine is present on Arg42. Fe(3+)-binding residues include Asp82 and Tyr114. 8 disulfide bridges follow: Cys137-Cys213, Cys156-Cys350, Cys177-Cys193, Cys180-Cys196, Cys190-Cys198, Cys246-Cys260, Cys363-Cys395, and Cys373-Cys386. 4 residues coordinate hydrogencarbonate: Thr139, Arg143, Ala145, and Gly146. Tyr207 is a Fe(3+) binding site. His268 lines the Fe(3+) pocket. Ser388 bears the Phosphoserine mark. Positions 410 and 448 each coordinate Fe(3+). 8 disulfide bridges follow: Cys420-Cys692, Cys435-Cys655, Cys472-Cys543, Cys496-Cys683, Cys506-Cys520, Cys517-Cys526, Cys583-Cys597, and Cys633-Cys638. Positions 474, 478, 480, and 481 each coordinate hydrogencarbonate. Asn513 is a glycosylation site (N-linked (GlcNAc...) asparagine). Fe(3+) is bound at residue Tyr537. His605 lines the Fe(3+) pocket. At Ser684 the chain carries Phosphoserine.

It belongs to the transferrin family. As to quaternary structure, monomer. Part of a complex composed of SLC40A1/ferroportin, TF/transferrin and HEPH/hephaestin that transfers iron from cells to transferrin. Expressed by the liver and secreted in plasma.

The protein localises to the secreted. Transferrins are iron binding transport proteins which can bind two Fe(3+) ions in association with the binding of an anion, usually bicarbonate. It is responsible for the transport of iron from sites of absorption and heme degradation to those of storage and utilization. Serum transferrin may also have a further role in stimulating cell proliferation. The sequence is that of Serotransferrin (Tf) from Mus musculus (Mouse).